Consider the following 292-residue polypeptide: Tetrahydromethanopterin:alpha-L-glutamate ligase (292 aa).

Positions 103–286 (SFLMEVHKIP…IAQNLIDEAL (184 aa)) constitute an ATP-grasp domain. Residues K138, 176-188 (QEFV…VYRD), and R204 each bind ATP. D247, E259, and N261 together coordinate Mg(2+). The Mn(2+) site is built by D247, E259, and N261.

This sequence belongs to the RimK family. MptN subfamily. Homodimer. Requires Mg(2+) as cofactor. It depends on Mn(2+) as a cofactor.

It carries out the reaction 5,6,7,8-tetrahydromethanopterin + L-glutamate + ATP = 5,6,7,8-tetrahydrosarcinapterin + ADP + phosphate + H(+). Its pathway is cofactor biosynthesis; 5,6,7,8-tetrahydrosarcinapterin biosynthesis. Catalyzes the ATP or GTP-dependent addition of one L-glutamate molecule to tetrahydromethanopterin, producing tetrahydrosarcinapterin. The protein is Tetrahydromethanopterin:alpha-L-glutamate ligase (mptN) of Methanococcus maripaludis (strain DSM 14266 / JCM 13030 / NBRC 101832 / S2 / LL).